The primary structure comprises 97 residues: Putative pterin-4-alpha-carbinolamine dehydratase (97 aa).

Belongs to the pterin-4-alpha-carbinolamine dehydratase family.

The enzyme catalyses (4aS,6R)-4a-hydroxy-L-erythro-5,6,7,8-tetrahydrobiopterin = (6R)-L-erythro-6,7-dihydrobiopterin + H2O. The protein is Putative pterin-4-alpha-carbinolamine dehydratase of Opitutus terrae (strain DSM 11246 / JCM 15787 / PB90-1).